The sequence spans 466 residues: Soluble pyridine nucleotide transhydrogenase (466 aa).

Residue 36 to 45 participates in FAD binding; the sequence is ERYHNIGGGC.

This sequence belongs to the class-I pyridine nucleotide-disulfide oxidoreductase family. The cofactor is FAD.

The protein localises to the cytoplasm. It carries out the reaction NAD(+) + NADPH = NADH + NADP(+). In terms of biological role, conversion of NADPH, generated by peripheral catabolic pathways, to NADH, which can enter the respiratory chain for energy generation. This Erwinia tasmaniensis (strain DSM 17950 / CFBP 7177 / CIP 109463 / NCPPB 4357 / Et1/99) protein is Soluble pyridine nucleotide transhydrogenase.